Reading from the N-terminus, the 53-residue chain is Large ribosomal subunit protein bL32c (53 aa).

The protein belongs to the bacterial ribosomal protein bL32 family.

It is found in the plastid. It localises to the chloroplast. The polypeptide is Large ribosomal subunit protein bL32c (Coffea arabica (Arabian coffee)).